The following is an 84-amino-acid chain: uncharacterized protein (84 aa).

This is an uncharacterized protein from Acidianus convivator (ATV).